A 523-amino-acid polypeptide reads, in one-letter code: 2-isopropylmalate synthase (523 aa).

The region spanning 5-267 (VIIFDTTLRD…HTNINHHEIW (263 aa)) is the Pyruvate carboxyltransferase domain. Asp14, His202, His204, and Asn238 together coordinate Mn(2+). The segment at 392-523 (RLDYFSVQSG…QNKENNKETV (132 aa)) is regulatory domain.

Belongs to the alpha-IPM synthase/homocitrate synthase family. LeuA type 1 subfamily. In terms of assembly, homodimer. It depends on Mn(2+) as a cofactor.

It is found in the cytoplasm. The catalysed reaction is 3-methyl-2-oxobutanoate + acetyl-CoA + H2O = (2S)-2-isopropylmalate + CoA + H(+). It functions in the pathway amino-acid biosynthesis; L-leucine biosynthesis; L-leucine from 3-methyl-2-oxobutanoate: step 1/4. In terms of biological role, catalyzes the condensation of the acetyl group of acetyl-CoA with 3-methyl-2-oxobutanoate (2-ketoisovalerate) to form 3-carboxy-3-hydroxy-4-methylpentanoate (2-isopropylmalate). The protein is 2-isopropylmalate synthase of Salmonella newport (strain SL254).